A 354-amino-acid polypeptide reads, in one-letter code: Hydrophobic dipeptide epimerase (354 aa).

Residues T134, K159, and 159-161 (KIK) contribute to the substrate site. D189 contributes to the Mg(2+) binding site. N191 is a binding site for substrate. Mg(2+)-binding residues include E215 and D240. Residues K264, 292–295 (CMAE), and 318–320 (DLD) each bind substrate.

This sequence belongs to the mandelate racemase/muconate lactonizing enzyme family. Requires Mg(2+) as cofactor.

In terms of biological role, catalyzes the epimerization of L-Ile-L-Tyr to L-Ile-D-Tyr (in vitro). Catalyzes the epimerization of dipeptides, with a preference for substrates with a hydrophobic or basic amino acid in the first position, followed by an aromatic residue in the second position. Has epimerase activity with L-Ile-L-Tyr, L-Val-L-Tyr and L-Arg-L-Tyr (in vitro). This is Hydrophobic dipeptide epimerase from Enterococcus faecalis (strain ATCC 700802 / V583).